Here is a 188-residue protein sequence, read N- to C-terminus: Epididymal-specific lipocalin-5 (188 aa).

Residues 1 to 19 (MENIMPFALLGLCVGLAAG) form the signal peptide. An intrachain disulfide couples Cys-82 to Cys-176.

It belongs to the calycin superfamily. Lipocalin family. In terms of processing, there are two similar, immunologically cross-reacting forms of this protein, designated B and C, which probably result from different processing of the amino end. The N-terminus of form C is probably blocked. Synthesized exclusively in the proximal part (caput epididymidis) of the epididymis. It makes up a substantial part of the total protein in the epididymal luminal fluid and binds to the sperm membrane.

It is found in the secreted. Functionally, associates with spermatozoa in the epididymal fluid but does not bind tightly to them. Binds both all-trans and 9-cis retinoic acid. May act as a retinoid carrier protein which is required for epididymal function and/or sperm maturation. The chain is Epididymal-specific lipocalin-5 (Lcn5) from Rattus norvegicus (Rat).